The chain runs to 227 residues: Ribose-5-phosphate isomerase A (227 aa).

Substrate-binding positions include 30–33 (TGST), 86–89 (DGAD), and 99–102 (KGMG). The Proton acceptor role is filled by E108. K126 is a substrate binding site.

It belongs to the ribose 5-phosphate isomerase family. In terms of assembly, homodimer.

It catalyses the reaction aldehydo-D-ribose 5-phosphate = D-ribulose 5-phosphate. It participates in carbohydrate degradation; pentose phosphate pathway; D-ribose 5-phosphate from D-ribulose 5-phosphate (non-oxidative stage): step 1/1. Catalyzes the reversible conversion of ribose-5-phosphate to ribulose 5-phosphate. The sequence is that of Ribose-5-phosphate isomerase A from Thermus thermophilus (strain ATCC 27634 / DSM 579 / HB8).